The sequence spans 271 residues: MALDIAMKFYLRSPLRRDRVECRITQSNEPLRPCIQTTDKTLLSELSNQENKVKKRVSFADSRGLALTMVKVYSDFDDELEIPFNISELIDNIVNLTTVEKEHFVLDFVQPSADYLDFRNRLKADSVCLENCMLKDKALVGTVKVKNLAFQKCVKIRITFDSWQTYTDYDCQYVKDSYGGSDKDTFSFDVSLPDSIQSNARLEFAVCFDCEGRIFWDSNKGLNYRIVRHGHRIPYDPVCVSVDQYGSPRCSYGIFPELPTYSGFDKLGPYY.

The short motif at 56-59 (RVSF) is the PP1-binding motif element. The CBM21 domain occupies 119–227 (RNRLKADSVC…SNKGLNYRIV (109 aa)).

As to quaternary structure, interacts with glycogen, PPP1CC catalytic subunit of PP1 and PYGL. Associates with glycogen particles. Forms complexes with debranching enzyme, glycogen phosphorylase, glycogen synthase and phosphorylase kinase which is necessary for its regulation of PP1 activity.

Acts as a glycogen-targeting subunit for phosphatase PP1. Facilitates interaction of the PP1 with enzymes of the glycogen metabolism and regulates its activity. Suppresses the rate at which PP1 dephosphorylates (inactivates) glycogen phosphorylase and enhances the rate at which it activates glycogen synthase and therefore limits glycogen breakdown. The protein is Protein phosphatase 1 regulatory subunit 3B-B (ppp1r3b-b) of Xenopus laevis (African clawed frog).